Consider the following 289-residue polypeptide: Diaminopimelate epimerase (289 aa).

Positions 11 and 78 each coordinate substrate. Catalysis depends on Cys87, which acts as the Proton donor. Residues 88-89 (GN), Asn163, Asn199, and 217-218 (ER) contribute to the substrate site. Cys226 functions as the Proton acceptor in the catalytic mechanism. 227 to 228 (GT) provides a ligand contact to substrate.

It belongs to the diaminopimelate epimerase family. In terms of assembly, homodimer.

It is found in the cytoplasm. The catalysed reaction is (2S,6S)-2,6-diaminopimelate = meso-2,6-diaminopimelate. The protein operates within amino-acid biosynthesis; L-lysine biosynthesis via DAP pathway; DL-2,6-diaminopimelate from LL-2,6-diaminopimelate: step 1/1. Its function is as follows. Catalyzes the stereoinversion of LL-2,6-diaminopimelate (L,L-DAP) to meso-diaminopimelate (meso-DAP), a precursor of L-lysine and an essential component of the bacterial peptidoglycan. In Mycobacterium bovis (strain ATCC BAA-935 / AF2122/97), this protein is Diaminopimelate epimerase.